The following is a 1199-amino-acid chain: Nucleolar protein 6 (1199 aa).

Positions 1–10 (MLRNKRKAGK) are enriched in basic residues. Disordered stretches follow at residues 1–51 (MLRN…EPKP) and 1146–1199 (KREQ…KALK). 2 stretches are compositionally biased toward basic and acidic residues: residues 28–37 (HAEDHSDLEH) and 1146–1169 (KREQ…EKST).

This sequence belongs to the NRAP family. In terms of assembly, part of the small subunit (SSU) processome, composed of more than 70 proteins and the RNA chaperone small nucleolar RNA (snoRNA) U3.

Its subcellular location is the nucleus. It localises to the nucleolus. The protein resides in the chromosome. In terms of biological role, part of the small subunit (SSU) processome, first precursor of the small eukaryotic ribosomal subunit. During the assembly of the SSU processome in the nucleolus, many ribosome biogenesis factors, an RNA chaperone and ribosomal proteins associate with the nascent pre-rRNA and work in concert to generate RNA folding, modifications, rearrangements and cleavage as well as targeted degradation of pre-ribosomal RNA by the RNA exosome. This chain is Nucleolar protein 6, found in Drosophila yakuba (Fruit fly).